The primary structure comprises 415 residues: Transfer protein TraSA (415 aa).

The region spanning 127–326 (DGAVHYRDYR…HRVNDETSAN (200 aa)) is the FtsK domain. 145–152 (GATESGKS) contacts ATP.

This is Transfer protein TraSA (traSA) from Streptomyces ambofaciens.